The following is a 141-amino-acid chain: Aspartate 1-decarboxylase 1 (141 aa).

The Schiff-base intermediate with substrate; via pyruvic acid role is filled by serine 25. Residue serine 25 is modified to Pyruvic acid (Ser). Threonine 57 is a binding site for substrate. The active-site Proton donor is tyrosine 58. Glycine 73–alanine 75 is a substrate binding site.

Belongs to the PanD family. In terms of assembly, heterooctamer of four alpha and four beta subunits. The cofactor is pyruvate. Is synthesized initially as an inactive proenzyme, which is activated by self-cleavage at a specific serine bond to produce a beta-subunit with a hydroxyl group at its C-terminus and an alpha-subunit with a pyruvoyl group at its N-terminus.

The protein localises to the cytoplasm. The catalysed reaction is L-aspartate + H(+) = beta-alanine + CO2. Its pathway is cofactor biosynthesis; (R)-pantothenate biosynthesis; beta-alanine from L-aspartate: step 1/1. In terms of biological role, catalyzes the pyruvoyl-dependent decarboxylation of aspartate to produce beta-alanine. The protein is Aspartate 1-decarboxylase 1 of Paenarthrobacter aurescens (strain TC1).